Consider the following 204-residue polypeptide: MMYKVRNMRETEVVISDKTANPAPLGLLGFGITTILLNLHNAGLFPINSMILAMGFAYGGIAQILASVMEYRKGNTFGTVAFGSYGLFWWSLVLLLVIPNLKFLETSGTAAASADPVAMASYLFMWGLFTLLMFIATLKLKRGIQVIFISLAVLFFLLTAGEITGSALITAVAGYEGIFTGAAAMYVGLAEVINETHGRDILPT.

6 helical membrane passes run 19–39 (TANP…LLNL), 42–62 (AGLF…GGIA), 78–98 (GTVA…LLVI), 116–136 (PVAM…MFIA), 143–163 (GIQV…AGEI), and 167–187 (ALIT…AMYV).

This sequence belongs to the acetate uptake transporter (AceTr) (TC 2.A.96) family.

Its subcellular location is the cell membrane. This is an uncharacterized protein from Methanothermobacter thermautotrophicus (strain ATCC 29096 / DSM 1053 / JCM 10044 / NBRC 100330 / Delta H) (Methanobacterium thermoautotrophicum).